We begin with the raw amino-acid sequence, 332 residues long: DNA-directed RNA polymerase subunit alpha (332 aa).

The tract at residues methionine 1–leucine 230 is alpha N-terminal domain (alpha-NTD). Positions glutamate 246–serine 332 are alpha C-terminal domain (alpha-CTD).

It belongs to the RNA polymerase alpha chain family. As to quaternary structure, homodimer. The RNAP catalytic core consists of 2 alpha, 1 beta, 1 beta' and 1 omega subunit. When a sigma factor is associated with the core the holoenzyme is formed, which can initiate transcription.

The enzyme catalyses RNA(n) + a ribonucleoside 5'-triphosphate = RNA(n+1) + diphosphate. DNA-dependent RNA polymerase catalyzes the transcription of DNA into RNA using the four ribonucleoside triphosphates as substrates. This chain is DNA-directed RNA polymerase subunit alpha, found in Campylobacter fetus subsp. fetus (strain 82-40).